Here is a 139-residue protein sequence, read N- to C-terminus: Protein archease (139 aa).

Residues D12, D138, and I139 each coordinate Ca(2+).

Belongs to the archease family.

Its function is as follows. Activates the tRNA-splicing ligase complex by facilitating the enzymatic turnover of catalytic subunit RtcB. Acts by promoting the guanylylation of RtcB, a key intermediate step in tRNA ligation. Can also alter the NTP specificity of RtcB such that ATP, dGTP or ITP is used efficiently. The polypeptide is Protein archease (Saccharolobus islandicus (strain Y.N.15.51 / Yellowstone #2) (Sulfolobus islandicus)).